Reading from the N-terminus, the 358-residue chain is Type II restriction enzyme CviJI (358 aa).

Mg(2+) serves as cofactor.

The catalysed reaction is Endonucleolytic cleavage of DNA to give specific double-stranded fragments with terminal 5'-phosphates.. In terms of biological role, a P subtype restriction enzyme that recognizes the double-stranded sequence 5'-RGCY-3' and cleaves after G-2. In the presence of ATP, there is a relaxation of its specificity and it can cleave 5'-RGCN-3' and 5'-YGCY-3', but not 5'-YGCR-3' (R.CviJI* activity). The polypeptide is Type II restriction enzyme CviJI (Paramecium bursaria Chlorella virus IL3A (PBCV-IL3A)).